The primary structure comprises 298 residues: dTDP-4-dehydrorhamnose reductase (298 aa).

NADH is bound by residues 10–12, 35–36, and 59–61; these read GQV, DL, and AYT. NADPH-binding positions include 11–12, 35–36, 59–61, and tyrosine 98; these read QV, DL, and AYT. DTDP-beta-L-rhamnose is bound at residue 100 to 101; that stretch reads TD. The NADH site is built by tyrosine 124 and lysine 128. 2 residues coordinate NADPH: tyrosine 124 and lysine 128. The active-site Proton donor/acceptor is tyrosine 124. Tryptophan 149 is a binding site for dTDP-beta-L-rhamnose.

This sequence belongs to the dTDP-4-dehydrorhamnose reductase family. Homodimer. Mg(2+) is required as a cofactor.

The catalysed reaction is dTDP-beta-L-rhamnose + NADP(+) = dTDP-4-dehydro-beta-L-rhamnose + NADPH + H(+). The protein operates within carbohydrate biosynthesis; dTDP-L-rhamnose biosynthesis. Its pathway is bacterial outer membrane biogenesis; LPS O-antigen biosynthesis. Its function is as follows. Involved in the biosynthesis of the dTDP-L-rhamnose which is an important component of lipopolysaccharide (LPS). Catalyzes the reduction of dTDP-6-deoxy-L-lyxo-4-hexulose to yield dTDP-L-rhamnose. This chain is dTDP-4-dehydrorhamnose reductase, found in Burkholderia thailandensis (strain ATCC 700388 / DSM 13276 / CCUG 48851 / CIP 106301 / E264).